The primary structure comprises 196 residues: MGSRSSHIALIPDVEHIRRETGFSQASLLRLYHRFQALDRDEKGFLSRLDLQQIGALAVNPLGDRIIDSFFPNGSQRLYFAGFARVLAYFRPIDEEDATLRDPKQPEPLNSRMNKLRFAFQLYDLDRDGKISRNEMLQVLRLMVGVQVTDEQLESITDRTVQEADEDGDGAVSFLEFTKSLEKMNIEQKMSIRILK.

The N-myristoyl glycine moiety is linked to residue Gly-2. EF-hand domains are found at residues 26–61 (ASLL…AVNP), 71–106 (FPNG…PKQP), 111–146 (SRMN…MVGV), and 152–187 (QLES…MNIE). The residue at position 27 (Ser-27) is a Phosphoserine. Residues Asp-124, Asp-126, Asp-128, Lys-130, and Glu-135 each contribute to the Ca(2+) site. Residues 137-148 (LQVLRLMVGVQV) carry the Nuclear export signal motif. Positions 165, 167, 169, and 176 each coordinate Ca(2+).

Belongs to the calcineurin regulatory subunit family. CHP subfamily. In terms of assembly, interacts with PPP3CA. Interacts with SLC9A1/NHE1; the interaction occurs in a calcium-dependent manner. Interacts with SLC9A1/NHE1.

The protein localises to the cytoplasm. The protein resides in the nucleus. It localises to the cell membrane. In terms of biological role, functions as an integral cofactor in cell pH regulation by controlling plasma membrane-type Na(+)/H(+) exchange activity. Binds to and activates SLC9A1/NHE1 in a serum-independent manner, thus increasing pH and protecting cells from serum deprivation-induced death. Also plays a role in the regulation of cell proliferation and tumor growth by increasing the phosphatase activity of PPP3CA in a calcium-dependent manner. Activator of the calcineurin/NFAT signaling pathway. Involved in the cytoplasmic translocation of the transcription factor NFATC3 to the nucleus. The polypeptide is Calcineurin B homologous protein 2 (Chp2) (Mus musculus (Mouse)).